The sequence spans 158 residues: NAD(P)H-quinone oxidoreductase subunit N (158 aa).

This sequence belongs to the complex I NdhN subunit family. In terms of assembly, NDH-1 can be composed of about 15 different subunits; different subcomplexes with different compositions have been identified which probably have different functions.

The protein localises to the cellular thylakoid membrane. The catalysed reaction is a plastoquinone + NADH + (n+1) H(+)(in) = a plastoquinol + NAD(+) + n H(+)(out). It carries out the reaction a plastoquinone + NADPH + (n+1) H(+)(in) = a plastoquinol + NADP(+) + n H(+)(out). Its function is as follows. NDH-1 shuttles electrons from an unknown electron donor, via FMN and iron-sulfur (Fe-S) centers, to quinones in the respiratory and/or the photosynthetic chain. The immediate electron acceptor for the enzyme in this species is believed to be plastoquinone. Couples the redox reaction to proton translocation, and thus conserves the redox energy in a proton gradient. Cyanobacterial NDH-1 also plays a role in inorganic carbon-concentration. In Nostoc punctiforme (strain ATCC 29133 / PCC 73102), this protein is NAD(P)H-quinone oxidoreductase subunit N.